The primary structure comprises 123 residues: Chondroitin proteoglycan 8 (123 aa).

The signal sequence occupies residues 1–16; sequence MRPFILLALLFSVAIA. The tract at residues 32 to 123 is disordered; the sequence is SVRRSTRGAD…SGSGDEAPAE (92 aa). The segment covering 38–60 has biased composition (basic and acidic residues); that stretch reads RGADKKADSSDSSDSNEKDDKVT. 2 O-linked (Xyl...) (chondroitin sulfate) serine glycosylation sites follow: S63 and S65. Over residues 74–84 the composition is skewed to basic and acidic residues; it reads EQLRRVARDVE. O-linked (Xyl...) (chondroitin sulfate) serine glycosylation is found at S87, S93, and S114.

The polypeptide is Chondroitin proteoglycan 8 (cpg-8) (Caenorhabditis briggsae).